The primary structure comprises 2313 residues: Cell surface glycoprotein 1 (2313 aa).

The N-terminal stretch at 1-28 (MKRKNKVLSILLTLLLIISTTSVNMSFA) is a signal peptide. 2 Cohesin domains span residues 34–197 (IEMV…VVEA) and 205–367 (VALE…EIVV). Acidic residues predominate over residues 369–378 (GEEPGEEPTE). The segment at 369–400 (GEEPGEEPTEEPVPTETSVDPTPTVTEEPVPS) is disordered. The span at 380–400 (PVPTETSVDPTPTVTEEPVPS) shows a compositional bias: low complexity. The Cohesin 3 domain maps to 407–569 (VIMELDKTKV…SVVQPGEIVV (163 aa)). Residues 571–580 (GEEPGEEPTE) are compositionally biased toward acidic residues. The segment at 571–602 (GEEPGEEPTEEPVPTETSVDPTPTVTEEPVPS) is disordered. Residues 582–602 (PVPTETSVDPTPTVTEEPVPS) are compositionally biased toward low complexity. The Cohesin 4 domain maps to 609-771 (VIMELDKTKV…SVVQPGEIVA (163 aa)). A compositionally biased stretch (acidic residues) spans 772 to 782 (EGEEPGEEPTE). A disordered region spans residues 772-805 (EGEEPGEEPTEEPVPTETSADPTPTVTEEPVPSE). Over residues 784-803 (PVPTETSADPTPTVTEEPVP) the composition is skewed to low complexity. The Cohesin 5 domain maps to 811 to 973 (VIMELDKTKV…SVVQPGEIVA (163 aa)). Positions 974–984 (EGEEPGEEPTE) are enriched in acidic residues. The disordered stretch occupies residues 974-1007 (EGEEPGEEPTEEPVPTETPVDPTPTVTEEPVPSE). Residues 986–1007 (PVPTETPVDPTPTVTEEPVPSE) are compositionally biased toward low complexity. The Cohesin 6 domain occupies 1013-1175 (VIMELDKTKV…SVVQPGEIVA (163 aa)). Disordered stretches follow at residues 1177–1203 (GEEP…EPVP) and 1374–2111 (ASDE…PDGS). The span at 1184–1203 (PVPTETPVDPTPTVTEEPVP) shows a compositional bias: low complexity. The 165-residue stretch at 1211–1375 (VIMELDKTKV…IQPAPIKAAS (165 aa)) folds into the Cohesin 7 domain. Residues 1376-1390 (DEPIPTDTPSDEPTP) are compositionally biased toward low complexity. Residues 1383–2025 (TPSDEPTPSD…SDEPTPSETP (643 aa)) are approximate tandem repeats of T-P-S-D-E-P. The segment covering 1391–1411 (SDEPTPSDEPTPSDEPTPSDE) has biased composition (pro residues). Low complexity predominate over residues 1423 to 1433 (PTDTPSDEPTP). Residues 1434 to 1454 (SDEPTPSDEPTPSDEPTPSDE) show a composition bias toward pro residues. Residues 1466–1476 (PTDTPSDEPTP) are compositionally biased toward low complexity. Pro residues predominate over residues 1477–1497 (SDEPTPSDEPTPSDEPTPSDE). A compositionally biased stretch (low complexity) spans 1509 to 1519 (PTDTPSDEPTP). The segment covering 1520 to 1540 (SDEPTPSDEPTPSDEPTPSDE) has biased composition (pro residues). The segment covering 1552-1562 (PTDTPSDEPTP) has biased composition (low complexity). Residues 1563-1595 (SDEPTPSDEPTPSDEPTPSDEPTPSDEPTPSDE) show a composition bias toward pro residues. A compositionally biased stretch (low complexity) spans 1607 to 1617 (PTDTPSDEPTP). The span at 1618-1650 (SDEPTPSDEPTPSDEPTPSDEPTPSDEPTPSDE) shows a compositional bias: pro residues. A compositionally biased stretch (low complexity) spans 1662–1672 (PTDTPSDEPTP). The segment covering 1673–1693 (SDEPTPSDEPTPSDEPTPSDE) has biased composition (pro residues). Positions 1705–1715 (PTDTPSDEPTP) are enriched in low complexity. Over residues 1716–1736 (SDEPTPSDEPTPSDEPTPSDE) the composition is skewed to pro residues. Residues 1748–1758 (PTDTPSDEPTP) show a composition bias toward low complexity. Over residues 1759–1779 (SDEPTPSDEPTPSDEPTPSDE) the composition is skewed to pro residues. Low complexity predominate over residues 1791-1801 (PTDTPSDEPTP). A compositionally biased stretch (pro residues) spans 1802-1822 (SDEPTPSDEPTPSDEPTPSDE). The segment covering 1834–1844 (PTDTPSDEPTP) has biased composition (low complexity). The segment covering 1845-1865 (SDEPTPSDEPTPSDEPTPSDE) has biased composition (pro residues). Over residues 1877-1887 (PTDTPSDEPTP) the composition is skewed to low complexity. The span at 1888-1908 (SDEPTPSDEPTPSDEPTPSDE) shows a compositional bias: pro residues. Low complexity predominate over residues 1920-1930 (PTDTPSDEPTP). A compositionally biased stretch (pro residues) spans 1931-1963 (SDEPTPSDEPTPSDEPTPSDEPTPSDEPTPSDE). Residues 1975 to 1985 (PTDTPSDEPTP) show a composition bias toward low complexity. Composition is skewed to pro residues over residues 1986-2018 (SDEP…PSDE) and 2027-2039 (EPTP…PTPS). A compositionally biased stretch (gly residues) spans 2045 to 2062 (GSGGSGGSGGGGGGGGGT). 3 SLH domains span residues 2067 to 2140 (PTPT…YGAQ), 2141 to 2204 (SASP…EIMS), and 2211 to 2274 (ISNP…GAPK). The span at 2073–2082 (SKPTSTPAPT) shows a compositional bias: low complexity.

Assembled into mono-layered crystalline arrays.

It is found in the secreted. The protein resides in the cell wall. It localises to the S-layer. The sequence is that of Cell surface glycoprotein 1 (olpB) from Acetivibrio thermocellus (strain ATCC 27405 / DSM 1237 / JCM 9322 / NBRC 103400 / NCIMB 10682 / NRRL B-4536 / VPI 7372) (Clostridium thermocellum).